Reading from the N-terminus, the 130-residue chain is Iron-sulfur cluster insertion protein ErpA (130 aa).

3 residues coordinate iron-sulfur cluster: C46, C116, and C118.

It belongs to the HesB/IscA family. As to quaternary structure, homodimer. Requires iron-sulfur cluster as cofactor.

Its function is as follows. Required for insertion of 4Fe-4S clusters for at least IspG. The protein is Iron-sulfur cluster insertion protein ErpA of Legionella pneumophila subsp. pneumophila (strain Philadelphia 1 / ATCC 33152 / DSM 7513).